The primary structure comprises 1178 residues: Tricalbin-2 (1178 aa).

Polar residues predominate over residues 1–17 (MSPNSSKTRTDQISSMP). The tract at residues 1-27 (MSPNSSKTRTDQISSMPGINEATKVES) is disordered. Residues 1–98 (MSPNSSKTRT…NLLPDKFYGD (98 aa)) are Cytoplasmic-facing. A helical transmembrane segment spans residues 99–119 (WYHEVAILIIAGLCSFVLGYF). A topological domain (extracellular) is located at residue K120. The helical transmembrane segment at 121-141 (FSLASVLIVMLTTGMLYRTSS) threads the bilayer. Residues 142–1178 (KKYRESLRDL…TGDKKSEEKQ (1037 aa)) lie on the Cytoplasmic side of the membrane. An SMP-LTD domain is found at 164–367 (DYESVEWLNT…PPFSLQLNIP (204 aa)). 3 consecutive C2 domains span residues 358–481 (PPFS…EKVH), 504–628 (PKKL…LKVT), and 632–749 (RPVD…DKYT). Residues 784–821 (LSLEEAKEVDEINEKKDKLEKQKSTLDDKNISKEEKER) adopt a coiled-coil conformation. Residues 962–1086 (QVSWFPVTAT…DPESDTTFNI (125 aa)) enclose the C2 4 domain. S991 bears the Phosphoserine mark.

Belongs to the tricalbin family. In terms of assembly, interacts with TCB1 and TCB3 via its C-terminal domain.

The protein resides in the cell membrane. It is found in the endoplasmic reticulum membrane. Its function is as follows. May play a role in membrane trafficking. This chain is Tricalbin-2 (TCB2), found in Saccharomyces cerevisiae (strain ATCC 204508 / S288c) (Baker's yeast).